Consider the following 1400-residue polypeptide: DNA-directed RNA polymerase subunit beta' (1400 aa).

Positions 71, 73, 86, and 89 each coordinate Zn(2+). Residues aspartate 462, aspartate 464, and aspartate 466 each coordinate Mg(2+). Cysteine 811, cysteine 885, cysteine 892, and cysteine 895 together coordinate Zn(2+).

It belongs to the RNA polymerase beta' chain family. As to quaternary structure, the RNAP catalytic core consists of 2 alpha, 1 beta, 1 beta' and 1 omega subunit. When a sigma factor is associated with the core the holoenzyme is formed, which can initiate transcription. Mg(2+) serves as cofactor. The cofactor is Zn(2+).

The enzyme catalyses RNA(n) + a ribonucleoside 5'-triphosphate = RNA(n+1) + diphosphate. Functionally, DNA-dependent RNA polymerase catalyzes the transcription of DNA into RNA using the four ribonucleoside triphosphates as substrates. This chain is DNA-directed RNA polymerase subunit beta', found in Brucella suis (strain ATCC 23445 / NCTC 10510).